The primary structure comprises 293 residues: Ribosomal RNA small subunit methyltransferase A (293 aa).

6 residues coordinate S-adenosyl-L-methionine: Asn-38, Val-40, Gly-65, Glu-86, Asp-116, and Asn-133.

The protein belongs to the class I-like SAM-binding methyltransferase superfamily. rRNA adenine N(6)-methyltransferase family. RsmA subfamily.

The protein resides in the cytoplasm. The catalysed reaction is adenosine(1518)/adenosine(1519) in 16S rRNA + 4 S-adenosyl-L-methionine = N(6)-dimethyladenosine(1518)/N(6)-dimethyladenosine(1519) in 16S rRNA + 4 S-adenosyl-L-homocysteine + 4 H(+). In terms of biological role, specifically dimethylates two adjacent adenosines (A1518 and A1519) in the loop of a conserved hairpin near the 3'-end of 16S rRNA in the 30S particle. May play a critical role in biogenesis of 30S subunits. The protein is Ribosomal RNA small subunit methyltransferase A of Paenarthrobacter aurescens (strain TC1).